A 150-amino-acid polypeptide reads, in one-letter code: Catabolic 3-dehydroquinase 2 (150 aa).

Residue tyrosine 23 is the Proton acceptor of the active site. The substrate site is built by asparagine 74, histidine 80, and aspartate 87. Residue histidine 100 is the Proton donor of the active site. Substrate is bound by residues 101-102 (IT) and arginine 111.

The protein belongs to the type-II 3-dehydroquinase family. In terms of assembly, homododecamer. Adopts a ring-like structure, composed of an arrangement of two hexameric rings stacked on top of one another.

The catalysed reaction is 3-dehydroquinate = 3-dehydroshikimate + H2O. It participates in aromatic compound metabolism; 3,4-dihydroxybenzoate biosynthesis; 3,4-dihydroxybenzoate from 3-dehydroquinate: step 1/2. Its function is as follows. Is involved in the catabolism of quinate. Allows the utilization of quinate as carbon source via the beta-ketoadipate pathway. This is Catabolic 3-dehydroquinase 2 from Neosartorya fischeri (strain ATCC 1020 / DSM 3700 / CBS 544.65 / FGSC A1164 / JCM 1740 / NRRL 181 / WB 181) (Aspergillus fischerianus).